The sequence spans 122 residues: Flagellar protein FliT (122 aa).

The interval 1–50 (MTSTVEFINRWQRIALLSQSLLELAQRGEWELLLQQEVSYLQSIETVMEK) is required for homodimerization. The fliD binding stretch occupies residues 60-98 (IQDMVAGYIKQTLDNEQRLKGLLQQRLDELSGLIGQSTR).

The protein belongs to the FliT family. Homodimer. Interacts with FliD and FlhC.

Its subcellular location is the cytoplasm. The protein resides in the cytosol. In terms of biological role, dual-function protein that regulates the transcription of class 2 flagellar operons and that also acts as an export chaperone for the filament-capping protein FliD. As a transcriptional regulator, acts as an anti-FlhDC factor; it directly binds FlhC, thus inhibiting the binding of the FlhC/FlhD complex to class 2 promoters, resulting in decreased expression of class 2 flagellar operons. As a chaperone, effects FliD transition to the membrane by preventing its premature polymerization, and by directing it to the export apparatus. This chain is Flagellar protein FliT, found in Salmonella arizonae (strain ATCC BAA-731 / CDC346-86 / RSK2980).